The following is a 157-amino-acid chain: Regulatory protein RecX (157 aa).

Belongs to the RecX family.

It localises to the cytoplasm. In terms of biological role, modulates RecA activity. The polypeptide is Regulatory protein RecX (Leptothrix cholodnii (strain ATCC 51168 / LMG 8142 / SP-6) (Leptothrix discophora (strain SP-6))).